The primary structure comprises 176 residues: Peroxynitrite isomerase 1 (176 aa).

The interval 1–23 is disordered; sequence MDENSTLSPAHSDAAASSSANTP. A compositionally biased stretch (low complexity) spans 8 to 20; it reads SPAHSDAAASSSA. A GXWXGXG motif is present at residues 37-43; the sequence is GLWRGEG. Histidine 168 contributes to the heme b binding site.

Belongs to the nitrobindin family. Homodimer. Heme b serves as cofactor.

It carries out the reaction peroxynitrite = nitrate. It participates in nitrogen metabolism. In terms of biological role, heme-binding protein able to scavenge peroxynitrite and to protect free L-tyrosine against peroxynitrite-mediated nitration, by acting as a peroxynitrite isomerase that converts peroxynitrite to nitrate. Therefore, this protein likely plays a role in peroxynitrite sensing and in the detoxification of reactive nitrogen and oxygen species (RNS and ROS, respectively). Is able to bind nitric oxide (NO) in vitro, but may act as a sensor of peroxynitrite levels in vivo. The protein is Peroxynitrite isomerase 1 of Rhodococcus jostii (strain RHA1).